Consider the following 761-residue polypeptide: Neutral ceramidase (761 aa).

Residues 1–11 (MAKRTFSSLEA) lie on the Cytoplasmic side of the membrane. The chain crosses the membrane as a helical; Signal-anchor for type II membrane protein span at residues 12–32 (FLIFLLVMMTAITVALLTLLF). Topologically, residues 33–761 (VTSGTIENHK…ISSPFEIVTT (729 aa)) are lumenal. The tract at residues 43 to 76 (DSGNHWVSTTQGPTTTQSSPTTQTPTTQTPDLPP) is disordered. The segment covering 50-76 (STTQGPTTTQSSPTTQTPTTQTPDLPP) has biased composition (low complexity). Thr-51, Thr-52, Thr-56, Thr-57, and Thr-58 each carry an O-linked (GalNAc...) threonine glycan. Residues Ser-60 and Ser-61 are each glycosylated (O-linked (GalNAc...) serine). 6 O-linked (GalNAc...) threonine glycosylation sites follow: Thr-63, Thr-64, Thr-66, Thr-68, Thr-69, and Thr-71. Leu-115 contributes to the Ca(2+) binding site. Residue His-175 coordinates Zn(2+). A glycan (N-linked (GlcNAc...) asparagine) is linked at Asn-198. Residue His-284 participates in Zn(2+) binding. The Nucleophile role is filled by Ser-335. Cystine bridges form between Cys-343-Cys-357 and Cys-350-Cys-365. N-linked (GlcNAc...) asparagine glycosylation is found at Asn-412 and Asn-449. Cys-429 and Cys-479 form a disulfide bridge. Zn(2+) is bound by residues Glu-521 and Tyr-560. The Ca(2+) site is built by Asp-693, Ser-695, and Thr-698. The interval 751-761 (GISSPFEIVTT) is required for correct folding and localization.

It belongs to the neutral ceramidase family. The cofactor is Zn(2+). Post-translationally, proteolytic cleavage of the N-terminus removes the signal-anchor and produces a soluble form of the protein. In terms of processing, N-glycosylated. Required for enzyme activity. O-glycosylated. Required to retain it as a type II membrane protein at the cell surface. Post-translationally, phosphorylated. May prevent ubiquitination and subsequent degradation. In terms of processing, ubiquitinated, leading to its degradation by the proteasome. Ubiquitination is triggered by nitric oxide. Highly expressed in brain, kidney and heart. Expressed at lower level in other tissues such as liver. Expressed in intestine, kidney and liver (at protein level). Localizes in the epithelia of the jejunum and ileum.

It is found in the cell membrane. The protein resides in the membrane raft. Its subcellular location is the membrane. The protein localises to the caveola. It localises to the golgi apparatus membrane. It is found in the mitochondrion. The protein resides in the secreted. Its subcellular location is the extracellular exosome. It carries out the reaction an N-acylsphing-4-enine + H2O = sphing-4-enine + a fatty acid. The enzyme catalyses N-hexadecanoylsphing-4-enine + H2O = sphing-4-enine + hexadecanoate. It catalyses the reaction N-tetradecanoylsphing-4-enine + H2O = tetradecanoate + sphing-4-enine. The catalysed reaction is N-(9Z-octadecenoyl)-sphing-4-enine + H2O = sphing-4-enine + (9Z)-octadecenoate. It carries out the reaction N-(15Z-tetracosenoyl)-sphing-4-enine + H2O = (15Z)-tetracosenoate + sphing-4-enine. The enzyme catalyses N-octanoylsphing-4-enine + H2O = octanoate + sphing-4-enine. It catalyses the reaction N-dodecanoylsphing-4-enine + H2O = dodecanoate + sphing-4-enine. The catalysed reaction is N-(hexanoyl)sphing-4-enine + H2O = hexanoate + sphing-4-enine. It carries out the reaction N-octadecanoylsphing-4-enine + H2O = sphing-4-enine + octadecanoate. The enzyme catalyses sphinganine + hexadecanoate = N-hexadecanoylsphinganine + H2O. It catalyses the reaction N-(octadecanoyl)-sphinganine + H2O = sphinganine + octadecanoate. It participates in lipid metabolism; sphingolipid metabolism. Its activity is regulated as follows. The reverse reaction is inhibited by Zn(2+) and Cu(2+). Inhibited by cardiolipin and phosphatidic acid. Plasma membrane ceramidase that hydrolyzes sphingolipid ceramides into sphingosine and free fatty acids at neutral pH. Ceramides, sphingosine, and its phosphorylated form sphingosine-1-phosphate are bioactive lipids that mediate cellular signaling pathways regulating several biological processes including cell proliferation, apoptosis and differentiation. Also catalyzes the reverse reaction allowing the synthesis of ceramides from fatty acids and sphingosine. Together with sphingomyelinase, participates in the production of sphingosine and sphingosine-1-phosphate from the degradation of sphingomyelin, a sphingolipid enriched in the plasma membrane of cells. Also participates in the hydrolysis of ceramides from the extracellular milieu allowing the production of sphingosine-1-phosphate inside and outside cells. This is the case for instance with the digestion of dietary sphingolipids in the intestinal tract. This chain is Neutral ceramidase (Asah2), found in Rattus norvegicus (Rat).